Here is a 118-residue protein sequence, read N- to C-terminus: Beta-2-microglobulin (118 aa).

The first 20 residues, 1–20, serve as a signal peptide directing secretion; it reads MAVSAALVLLGLLSLSGLDA. The Ig-like C1-type domain maps to 25–112; the sequence is PEVQVYSRHP…HVTLTQPKIV (88 aa). Cys-45 and Cys-99 are joined by a disulfide.

Belongs to the beta-2-microglobulin family. Heterodimer of an alpha chain and a beta chain. Beta-2-microglobulin is the beta-chain of major histocompatibility complex class I molecules.

The protein resides in the secreted. Its function is as follows. Component of the class I major histocompatibility complex (MHC). Involved in the presentation of peptide antigens to the immune system. The chain is Beta-2-microglobulin (B2M) from Ovis aries (Sheep).